Consider the following 245-residue polypeptide: Eukaryotic translation initiation factor 4E type 2 (245 aa).

Residues 1–38 (MNNKFDALKDDDSGDHDQNEENSTQKDGEKEKTERDKN) are compositionally biased toward basic and acidic residues. The interval 1–52 (MNNKFDALKDDDSGDHDQNEENSTQKDGEKEKTERDKNQSSSKRKAVVPGPA) is disordered. A Phosphoserine modification is found at Ser-13. An EIF4EBP1/2/3 binding region spans residues 54 to 57 (HPLQ). 78 to 79 (YE) contacts mRNA. The EIF4EBP1/2/3 binding stretch occupies residues 95–99 (WRFYS). MRNA-binding positions include His-110 and 124-125 (WE). An N6-acetyllysine; alternate modification is found at Lys-134. Residue Lys-134 forms a Glycyl lysine isopeptide (Lys-Gly) (interchain with G-Cter in ISG15); alternate linkage. The interval 150–157 (NLILAMLG) is EIF4EBP1/2/3 binding. Residues 174 to 179 (RFQEDI) and 222 to 224 (KMP) each bind mRNA. Lys-222 is covalently cross-linked (Glycyl lysine isopeptide (Lys-Gly) (interchain with G-Cter in ISG15)).

The protein belongs to the eukaryotic initiation factor 4E family. Interacts with EIF4EBP1, EIF4EBP2 and EIF4EBP3. Does not interact with eIF4G (EIF4G1, EIF4G2 or EIF4G3). Component of the 4EHP-GYF2 complex, at least composed of EIF4E2, GIGYF2 and ZNF598. Interacts with GIGYF2 (via the 4EHP-binding motif); the interaction is direct. Interacts with EIF4ENIF1/4E-T (via YXXXXLphi motif); increasing affinity for the 7-methylguanosine-containing mRNA cap. In terms of processing, ubiquitinated by ARIH1. The consequences of ubiquitination are however unclear: according to a report, EIF4E2 ubiquitination leads to promote EIF4E2 cap-binding and protein translation arrest. According to another report ubiquitination leads to its subsequent degradation. ISGylation enhances its cap structure-binding activity and translation-inhibition activity.

The protein localises to the cytoplasm. It is found in the P-body. In terms of biological role, recognizes and binds the 7-methylguanosine-containing mRNA cap during an early step in the initiation. Acts as a repressor of translation initiation. In contrast to EIF4E, it is unable to bind eIF4G (EIF4G1, EIF4G2 or EIF4G3), suggesting that it acts by competing with EIF4E and block assembly of eIF4F at the cap. In P-bodies, component of a complex that promotes miRNA-mediated translational repression. Involved in virus-induced host response by mediating miRNA MIR34A-induced translational silencing which controls IFNB1 production by a negative feedback mechanism. Its function is as follows. Component of the 4EHP-GYF2 complex, a multiprotein complex that acts as a repressor of translation initiation. In association with GIGYF2, assists ribosome-associated quality control (RQC) by sequestering the mRNA cap, blocking ribosome initiation and decreasing the translational load on problematic messages. Part of a pathway that works in parallel to RQC-mediated degradation of the stalled nascent polypeptide. GIGYF2 and EIF4E2 work downstream and independently of ZNF598, which seems to work as a scaffold that can recruit them to faulty mRNA even if alternative recruitment mechanisms may exist. Functionally, (Microbial infection) Upon SARS coronavirus-2/SARS-CoV-2 infection, the interaction with non-structural protein 2 (nsp2) with GIGYF2 enhances GIGYF2 binding to EIF4E2 and increases repression of translation initiation of genes involved in antiviral innate immune response such as IFNB1. This Homo sapiens (Human) protein is Eukaryotic translation initiation factor 4E type 2.